The primary structure comprises 89 residues: Small ribosomal subunit protein uS17 (89 aa).

Belongs to the universal ribosomal protein uS17 family. As to quaternary structure, part of the 30S ribosomal subunit.

Functionally, one of the primary rRNA binding proteins, it binds specifically to the 5'-end of 16S ribosomal RNA. The polypeptide is Small ribosomal subunit protein uS17 (Xylella fastidiosa (strain 9a5c)).